The primary structure comprises 360 residues: Peptide chain release factor 1 (360 aa).

Gln235 is modified (N5-methylglutamine).

This sequence belongs to the prokaryotic/mitochondrial release factor family. Methylated by PrmC. Methylation increases the termination efficiency of RF1.

The protein localises to the cytoplasm. In terms of biological role, peptide chain release factor 1 directs the termination of translation in response to the peptide chain termination codons UAG and UAA. This is Peptide chain release factor 1 from Paracidovorax citrulli (strain AAC00-1) (Acidovorax citrulli).